The primary structure comprises 284 residues: Cytosolic Fe-S cluster assembly factor NUBP2 homolog (284 aa).

27-34 (GKGGVGKS) serves as a coordination point for ATP. [4Fe-4S] cluster-binding residues include Cys-200 and Cys-203.

It belongs to the Mrp/NBP35 ATP-binding proteins family. NUBP2/CFD1 subfamily. As to quaternary structure, heterotetramer of 2 NUBP1 and 2 NUBP2 chains. [4Fe-4S] cluster is required as a cofactor.

Its subcellular location is the cytoplasm. Functionally, component of the cytosolic iron-sulfur (Fe/S) protein assembly (CIA) machinery. Required for maturation of extramitochondrial Fe-S proteins. The NUBP1-NUBP2 heterotetramer forms a Fe-S scaffold complex, mediating the de novo assembly of an Fe-S cluster and its transfer to target apoproteins. In Monosiga brevicollis (Choanoflagellate), this protein is Cytosolic Fe-S cluster assembly factor NUBP2 homolog.